A 351-amino-acid polypeptide reads, in one-letter code: V-type proton ATPase subunit d1 (351 aa).

It belongs to the V-ATPase V0D/AC39 subunit family. As to quaternary structure, V-ATPase is a heteromultimeric enzyme composed of a peripheral catalytic V1 complex (components A to H) attached to an integral membrane V0 proton pore complex (components: a, c, c'', d and e).

It is found in the vacuole membrane. Its function is as follows. Subunit of the integral membrane V0 complex of vacuolar ATPase. Vacuolar ATPase is responsible for acidifying a variety of intracellular compartments in eukaryotic cells, thus providing most of the energy required for transport processes in the vacuolar system. The sequence is that of V-type proton ATPase subunit d1 (VHA-d1) from Arabidopsis thaliana (Mouse-ear cress).